The following is a 791-amino-acid chain: Phosphoenolpyruvate synthase (791 aa).

Thr416 bears the Phosphothreonine mark. His418 (tele-phosphohistidine intermediate) is an active-site residue. Substrate-binding residues include Arg508, Arg575, Glu677, Gly698, Ser699, Asn700, and Asp701. Glu677 lines the Mg(2+) pocket. Asp701 is a Mg(2+) binding site. The residue at position 744 (Tyr744) is a Phosphotyrosine. Cys748 functions as the Proton donor in the catalytic mechanism.

It belongs to the PEP-utilizing enzyme family. The cofactor is Mg(2+).

The enzyme catalyses pyruvate + ATP + H2O = phosphoenolpyruvate + AMP + phosphate + 2 H(+). The protein operates within carbohydrate biosynthesis; gluconeogenesis. Catalyzes the phosphorylation of pyruvate to phosphoenolpyruvate. This Pseudomonas aeruginosa (strain UCBPP-PA14) protein is Phosphoenolpyruvate synthase (ppsA).